A 345-amino-acid polypeptide reads, in one-letter code: Succinylglutamate desuccinylase (345 aa).

Zn(2+) is bound by residues H64, E67, and H161. E225 is an active-site residue.

The protein belongs to the AspA/AstE family. Succinylglutamate desuccinylase subfamily. The cofactor is Zn(2+).

The catalysed reaction is N-succinyl-L-glutamate + H2O = L-glutamate + succinate. Its pathway is amino-acid degradation; L-arginine degradation via AST pathway; L-glutamate and succinate from L-arginine: step 5/5. Transforms N(2)-succinylglutamate into succinate and glutamate. This chain is Succinylglutamate desuccinylase, found in Shewanella piezotolerans (strain WP3 / JCM 13877).